A 687-amino-acid polypeptide reads, in one-letter code: Glycine--tRNA ligase beta subunit (687 aa).

The protein belongs to the class-II aminoacyl-tRNA synthetase family. In terms of assembly, tetramer of two alpha and two beta subunits.

The protein localises to the cytoplasm. The enzyme catalyses tRNA(Gly) + glycine + ATP = glycyl-tRNA(Gly) + AMP + diphosphate. The chain is Glycine--tRNA ligase beta subunit from Geobacter sp. (strain M21).